The following is a 275-amino-acid chain: WIMGHMVNEVYQIDEFVDLGANSIETDITFDDDAMAEYSYHGVPCDCKRWCHKWEYVNTFLDGLRRATTPGDSKYRKELSLVVFDLKTGDLSSSTAYKGGKLFGQKLLDRYWNGGNNGGRAYIILSIPDLDHYAFITGFKEALKNAGHEELLAKIGYDFSGNDDLGSTRTALNKAGIKDREHVWQSDGITNCIGRGLGRVRDAVRNRDSSNGYINKVYYWTIEKYVSVRDALDAEVDGIMTNEPDVIVNVLNEGNYRGRFRLATYDDNPWETFKR.

Residue histidine 5 is part of the active site. The Mg(2+) site is built by glutamate 25 and aspartate 27. Residue histidine 41 is the Nucleophile of the active site. 2 cysteine pairs are disulfide-bonded: cysteine 45–cysteine 51 and cysteine 47–cysteine 192. Aspartate 85 contributes to the Mg(2+) binding site.

It belongs to the arthropod phospholipase D family. Class II subfamily. It depends on Mg(2+) as a cofactor. As to expression, expressed by the venom gland.

It is found in the secreted. The enzyme catalyses an N-(acyl)-sphingosylphosphocholine = an N-(acyl)-sphingosyl-1,3-cyclic phosphate + choline. It catalyses the reaction an N-(acyl)-sphingosylphosphoethanolamine = an N-(acyl)-sphingosyl-1,3-cyclic phosphate + ethanolamine. The catalysed reaction is a 1-acyl-sn-glycero-3-phosphocholine = a 1-acyl-sn-glycero-2,3-cyclic phosphate + choline. It carries out the reaction a 1-acyl-sn-glycero-3-phosphoethanolamine = a 1-acyl-sn-glycero-2,3-cyclic phosphate + ethanolamine. In terms of biological role, dermonecrotic toxins cleave the phosphodiester linkage between the phosphate and headgroup of certain phospholipids (sphingolipid and lysolipid substrates), forming an alcohol (often choline) and a cyclic phosphate. This toxin acts on sphingomyelin (SM). It may also act on ceramide phosphoethanolamine (CPE), lysophosphatidylcholine (LPC) and lysophosphatidylethanolamine (LPE), but not on lysophosphatidylserine (LPS), and lysophosphatidylglycerol (LPG). It acts by transphosphatidylation, releasing exclusively cyclic phosphate products as second products. Induces dermonecrosis, hemolysis, increased vascular permeability, edema, inflammatory response, and platelet aggregation. This is Dermonecrotic toxin LhSicTox-alphaIV2 from Loxosceles hirsuta (Recluse spider).